We begin with the raw amino-acid sequence, 718 residues long: Peroxisomal bifunctional enzyme (718 aa).

An enoyl-CoA hydratase / isomerase region spans residues 2 to 280; that stretch reads ARYELVKRSV…FAQRTAEKWT (279 aa). Position 100 (glycine 100) interacts with substrate. The 3-hydroxyacyl-CoA dehydrogenase stretch occupies residues 281–567; it reads LPSGAQWNNS…DMVCQQGRFG (287 aa). Positions 716 to 718 match the Microbody targeting signal motif; it reads SHL.

It in the N-terminal section; belongs to the enoyl-CoA hydratase/isomerase family. The protein in the C-terminal section; belongs to the 3-hydroxyacyl-CoA dehydrogenase family. As to quaternary structure, monomer.

It localises to the peroxisome. It catalyses the reaction a (3S)-3-hydroxyacyl-CoA = a (2E)-enoyl-CoA + H2O. It carries out the reaction a 4-saturated-(3S)-3-hydroxyacyl-CoA = a (3E)-enoyl-CoA + H2O. The enzyme catalyses a (3Z)-enoyl-CoA = a 4-saturated (2E)-enoyl-CoA. The catalysed reaction is a (3E)-enoyl-CoA = a 4-saturated (2E)-enoyl-CoA. It catalyses the reaction a (3S)-3-hydroxyacyl-CoA + NAD(+) = a 3-oxoacyl-CoA + NADH + H(+). It carries out the reaction (2S,3S)-3-hydroxy-2-methylbutanoyl-CoA = (2E)-2-methylbut-2-enoyl-CoA + H2O. The enzyme catalyses (3S)-hydroxyhexadecanoyl-CoA + NAD(+) = 3-oxohexadecanoyl-CoA + NADH + H(+). The catalysed reaction is (3S)-hydroxyhexadecanoyl-CoA = (2E)-hexadecenoyl-CoA + H2O. It catalyses the reaction (2E)-hexadecenedioyl-CoA + H2O = (3S)-hydroxyhexadecanedioyl-CoA. It carries out the reaction (3S)-hydroxyhexadecanedioyl-CoA + NAD(+) = 3-oxohexadecanedioyl-CoA + NADH + H(+). The enzyme catalyses (3E,5Z)-tetradecadienoyl-CoA = (2E,5Z)-tetradecadienoyl-CoA. The catalysed reaction is (3E,5Z)-octadienoyl-CoA = (2E,5Z)-octadienoyl-CoA. It catalyses the reaction (3S)-hydroxydecanoyl-CoA + NAD(+) = 3-oxodecanoyl-CoA + NADH + H(+). It carries out the reaction (3E)-decenoyl-CoA = (2E)-decenoyl-CoA. The enzyme catalyses (3Z)-hexenoyl-CoA = (2E)-hexenoyl-CoA. The catalysed reaction is (3E)-hexenoyl-CoA = (2E)-hexenoyl-CoA. It catalyses the reaction (3S)-hydroxydecanoyl-CoA = (2E)-decenoyl-CoA + H2O. It carries out the reaction (3S)-hydroxyhexanoyl-CoA = (2E)-hexenoyl-CoA + H2O. The protein operates within lipid metabolism; fatty acid beta-oxidation. In terms of biological role, peroxisomal trifunctional enzyme possessing 2-enoyl-CoA hydratase, 3-hydroxyacyl-CoA dehydrogenase, and delta 3, delta 2-enoyl-CoA isomerase activities. Catalyzes two of the four reactions of the long straight chain fatty acids peroxisomal beta-oxidation pathway. Can also use branched-chain fatty acids such as 2-methyl-2E-butenoyl-CoA as a substrate, which is hydrated into (2S,3S)-3-hydroxy-2-methylbutanoyl-CoA. Optimal isomerase for 2,5 double bonds into 3,5 form isomerization in a range of enoyl-CoA species. Also able to isomerize both 3-cis and 3-trans double bonds into the 2-trans form in a range of enoyl-CoA species. Regulates the amount of medium-chain dicarboxylic fatty acids which are essential regulators of all fatty acid oxidation pathways. Also involved in the degradation of long-chain dicarboxylic acids through peroxisomal beta-oxidation. This chain is Peroxisomal bifunctional enzyme (ehhadh), found in Danio rerio (Zebrafish).